We begin with the raw amino-acid sequence, 114 residues long: Cytochrome c2 (114 aa).

A Pyrrolidone carboxylic acid modification is found at Q1. 4 residues coordinate heme c: C13, C16, H17, and M93.

The protein belongs to the cytochrome c family. Post-translationally, binds 1 heme c group covalently per subunit.

It localises to the periplasm. Cytochrome c2 is found mainly in purple, non-sulfur, photosynthetic bacteria where it functions as the electron donor to the oxidized bacteriochlorophyll in the photophosphorylation pathway. However, it may also have a role in the respiratory chain and is found in some non-photosynthetic bacteria. The polypeptide is Cytochrome c2 (Rhodopseudomonas palustris).